Consider the following 266-residue polypeptide: Glutamate racemase (266 aa).

Substrate is bound by residues 9-10 and 41-42; these read DS and YG. C73 functions as the Proton donor/acceptor in the catalytic mechanism. Residue 74-75 coordinates substrate; the sequence is NS. The active-site Proton donor/acceptor is C183. 184–185 contacts substrate; sequence TH.

This sequence belongs to the aspartate/glutamate racemases family.

The enzyme catalyses L-glutamate = D-glutamate. Its pathway is cell wall biogenesis; peptidoglycan biosynthesis. In terms of biological role, provides the (R)-glutamate required for cell wall biosynthesis. In Shewanella loihica (strain ATCC BAA-1088 / PV-4), this protein is Glutamate racemase.